A 123-amino-acid polypeptide reads, in one-letter code: U11/U12 small nuclear ribonucleoprotein 25 kDa protein (123 aa).

Positions 32-123 constitute a Ubiquitin-like domain; sequence MTVRVCKMDG…VSFIKKLRQK (92 aa).

In terms of assembly, component of the U11/U12 snRNPs that are part of the U12-type spliceosome.

The protein localises to the nucleus. This Bos taurus (Bovine) protein is U11/U12 small nuclear ribonucleoprotein 25 kDa protein (SNRNP25).